A 456-amino-acid polypeptide reads, in one-letter code: Serine--tRNA ligase (456 aa).

Disordered regions lie at residues 107-130 and 229-253; these read PHSSVPEGRSESDNREVRRWGTPP and FLENQPVAATLPSNSNSPQGGQDDD. Positions 114-125 are enriched in basic and acidic residues; the sequence is GRSESDNREVRR. Residues 239–248 are compositionally biased toward polar residues; that stretch reads LPSNSNSPQG. An L-serine-binding site is contributed by 260 to 262; that stretch reads TSE. 291–293 serves as a coordination point for ATP; that stretch reads RSE. An L-serine-binding site is contributed by glutamate 314. Residue 378–381 coordinates ATP; the sequence is EISS. Residue serine 413 participates in L-serine binding.

The protein belongs to the class-II aminoacyl-tRNA synthetase family. Type-1 seryl-tRNA synthetase subfamily. Homodimer. The tRNA molecule binds across the dimer.

The protein localises to the cytoplasm. The enzyme catalyses tRNA(Ser) + L-serine + ATP = L-seryl-tRNA(Ser) + AMP + diphosphate + H(+). It catalyses the reaction tRNA(Sec) + L-serine + ATP = L-seryl-tRNA(Sec) + AMP + diphosphate + H(+). It functions in the pathway aminoacyl-tRNA biosynthesis; selenocysteinyl-tRNA(Sec) biosynthesis; L-seryl-tRNA(Sec) from L-serine and tRNA(Sec): step 1/1. Catalyzes the attachment of serine to tRNA(Ser). Is also able to aminoacylate tRNA(Sec) with serine, to form the misacylated tRNA L-seryl-tRNA(Sec), which will be further converted into selenocysteinyl-tRNA(Sec). The chain is Serine--tRNA ligase from Nitrosospira multiformis (strain ATCC 25196 / NCIMB 11849 / C 71).